A 975-amino-acid polypeptide reads, in one-letter code: Homeobox protein cut-like 1 (975 aa).

The segment at residues 1-73 (SRQVKEQLIK…ILALRSIQGR (73 aa)) is a DNA-binding region (CUT 1). Disordered regions lie at residues 90 to 113 (PKRR…GSDE) and 126 to 148 (LQVQ…TSDD). Positions 113–169 (EAIKSILEQAKRELQVQKTAEPAQPSSTSSSGTSDDAIRSILQQARREMEAQQAALD) form a coiled coil. Phosphoserine is present on S207. The disordered stretch occupies residues 209–246 (KKPPTAPDTSASTLPNPPALKKESQDAPGLDLPGAAES). Residues K229, K255, and K286 each participate in a glycyl lysine isopeptide (Lys-Gly) (interchain with G-Cter in SUMO2) cross-link. Over residues 262-297 (GVWKDHWWSTVQPERKSAAPPEDAKSEEAGGTKEKG) the composition is skewed to basic and acidic residues. Positions 262 to 369 (GVWKDHWWST…SKPAKPSVPP (108 aa)) are disordered. Positions 328–351 (RTPQSSELSLTGASRSETPQNSPL) are enriched in polar residues. S349 is modified (phosphoserine). A DNA-binding region (CUT 2) is located at residues 374-461 (QYEIYMYQEV…QGVLPVQGQQ (88 aa)). Residues 476-489 (LQQGCVSSESTPKT) are compositionally biased toward polar residues. Residues 476–549 (LQQGCVSSES…SQPATPLPLS (74 aa)) form a disordered region. Over residues 490–506 (SASCSPAPESPMSSSES) the composition is skewed to low complexity. Phosphoserine is present on residues S499 and S509. The CUT 3 DNA-binding region spans 557–644 (QELVAMSPEL…VEKLMDMKRM (88 aa)). Residues 652–687 (RRHSSVSDSQPCEPPSVGIDYSQGASPQPQHQLKKP) form a disordered region. A DNA-binding region (homeobox) is located at residues 684 to 743 (LKKPRVVLAPEEKEALKRAYQQKPYPSPKTIEELATQLNLKTSTVINWFHNYRSRIRREL). S710 carries the post-translational modification Phosphoserine. K724 is covalently cross-linked (Glycyl lysine isopeptide (Lys-Gly) (interchain with G-Cter in SUMO2)). Residues 752–949 (SQGQAGARHS…DSRDNPLRKK (198 aa)) are disordered. The span at 756-773 (AGARHSPSARSSGAAPSS) shows a compositional bias: low complexity. Position 777 is a phosphoserine (S777). Over residues 780 to 813 (GVEAAEGPGAADAEESAPAAAAKSQGGPAEAAVA) the composition is skewed to low complexity. A compositionally biased stretch (gly residues) spans 838–847 (PGRRGGGGPA). The segment covering 850 to 860 (APAAPAAAARG) has biased composition (low complexity). Basic residues predominate over residues 861 to 890 (PSRRPGARAKPRRRRRRRRRHARGGGRRYL). The segment covering 907 to 929 (RSSALPSTSAPAAARRPSSLQSL) has biased composition (low complexity). S925 carries the phosphoserine modification. Residues 937–946 (GARDSRDNPL) show a composition bias toward basic and acidic residues. A phosphoserine mark is found at S956 and S966.

The protein belongs to the CUT homeobox family. In terms of assembly, interacts with BANP. Post-translationally, as cells progress into S phase, a fraction of CUX1 molecules is proteolytically processed into N-terminally truncated proteins of 110 kDa by CTSL. Cell cycle-dependent processing of CUX1 serves to generate a CDP/Cux p110 with distinct DNA binding and transcriptional properties. In terms of processing, phosphorylated by PKA. As to expression, a broad pattern of expression observed in tissues of diverse origins, such as cartilage, liver, brain, lung, heart and skeletal muscle. There are 2 distinct protein species: the larger one (230-250 kDa) is found mainly in adult brain, lung and heart, and the smaller one (180-190 kDa) predominates in early embryonic tissues.

Its subcellular location is the nucleus. Transcription factor involved in the control of neuronal differentiation in the brain. Regulates dendrite development and branching, and dendritic spine formation in cortical layers II-III. Also involved in the control of synaptogenesis. In addition, it has probably a broad role in mammalian development as a repressor of developmentally regulated gene expression. May act by preventing binding of positively-activing CCAAT factors to promoters. Component of nf-munr repressor; binds to the matrix attachment regions (MARs) (5' and 3') of the immunoglobulin heavy chain enhancer. Represses T-cell receptor (TCR) beta enhancer function by binding to MARbeta, an ATC-rich DNA sequence located upstream of the TCR beta enhancer. Binds to the TH enhancer; may require the basic helix-loop-helix protein TCF4 as a coactivator. In terms of biological role, plays a role in cell cycle progression, in particular at the G1/S transition. As cells progress into S phase, a fraction of CUX1 molecules is proteolytically processed into N-terminally truncated proteins of 110 kDa. While CUX1 only transiently binds to DNA and carries the CCAAT-displacement activity, CDP/Cux p110 makes a stable interaction with DNA and stimulates expression of genes such as POLA1. The protein is Homeobox protein cut-like 1 (CUX1) of Canis lupus familiaris (Dog).